Reading from the N-terminus, the 460-residue chain is CUGBP Elav-like family member 6 (460 aa).

The segment covering 1-10 (MAAAPGGSAP) has biased composition (low complexity). Residues 1–37 (MAAAPGGSAPPAGPSPRLAFSTADSGGGMSGLNPGPA) are disordered. RRM domains follow at residues 46–127 (IKLF…PAAS) and 134–214 (RKLF…LADT). Positions 316 to 336 (NGFGSLTPQSNGQPGSDTLYN) are disordered. Residues 319-336 (GSLTPQSNGQPGSDTLYN) show a composition bias toward polar residues. The 79-residue stretch at 375-453 (CNLFIYHLPQ…KRLKVQLKRP (79 aa)) folds into the RRM 3 domain.

The protein belongs to the CELF/BRUNOL family.

It localises to the nucleus. The protein localises to the cytoplasm. RNA-binding protein implicated in the regulation of pre-mRNA alternative splicing. Mediates exon inclusion and/or exclusion in pre-mRNA that are subject to tissue-specific and developmentally regulated alternative splicing. Specifically activates exon 5 inclusion of TNNT2 in a muscle-specific splicing enhancer (MSE)-dependent manner. Promotes also exon exclusion of INSR pre-mRNA. This is CUGBP Elav-like family member 6 (Celf6) from Mus musculus (Mouse).